A 157-amino-acid polypeptide reads, in one-letter code: Ribosomal RNA large subunit methyltransferase H (157 aa).

S-adenosyl-L-methionine contacts are provided by residues L73, G105, and 124–129; that span reads MSKMTF.

Belongs to the RNA methyltransferase RlmH family. Homodimer.

The protein localises to the cytoplasm. The catalysed reaction is pseudouridine(1915) in 23S rRNA + S-adenosyl-L-methionine = N(3)-methylpseudouridine(1915) in 23S rRNA + S-adenosyl-L-homocysteine + H(+). Specifically methylates the pseudouridine at position 1915 (m3Psi1915) in 23S rRNA. In Bacteroides thetaiotaomicron (strain ATCC 29148 / DSM 2079 / JCM 5827 / CCUG 10774 / NCTC 10582 / VPI-5482 / E50), this protein is Ribosomal RNA large subunit methyltransferase H.